The primary structure comprises 545 residues: Probable protein kinase UbiB (545 aa).

The 379-residue stretch at 124 to 502 (DFDETPLASA…RRSQGLARFY (379 aa)) folds into the Protein kinase domain. ATP contacts are provided by residues 130–138 (LASASIAQV) and K153. D288 serves as the catalytic Proton acceptor. Helical transmembrane passes span 498–517 (LARF…AILF) and 521–540 (VETI…LLGW).

This sequence belongs to the ABC1 family. UbiB subfamily.

It localises to the cell inner membrane. It functions in the pathway cofactor biosynthesis; ubiquinone biosynthesis [regulation]. Is probably a protein kinase regulator of UbiI activity which is involved in aerobic coenzyme Q (ubiquinone) biosynthesis. This is Probable protein kinase UbiB from Photobacterium profundum (strain SS9).